The chain runs to 671 residues: DNA ligase (671 aa).

Residues 32–36 (DAEYD), 81–82 (SL), and Glu113 each bind NAD(+). The active-site N6-AMP-lysine intermediate is Lys115. The NAD(+) site is built by Arg136, Glu173, Lys290, and Lys314. 4 residues coordinate Zn(2+): Cys408, Cys411, Cys426, and Cys432. The BRCT domain maps to 593 to 671 (EIDSPFAGKT…ETEMLHLLGS (79 aa)).

Belongs to the NAD-dependent DNA ligase family. LigA subfamily. Requires Mg(2+) as cofactor. It depends on Mn(2+) as a cofactor.

The enzyme catalyses NAD(+) + (deoxyribonucleotide)n-3'-hydroxyl + 5'-phospho-(deoxyribonucleotide)m = (deoxyribonucleotide)n+m + AMP + beta-nicotinamide D-nucleotide.. Its function is as follows. DNA ligase that catalyzes the formation of phosphodiester linkages between 5'-phosphoryl and 3'-hydroxyl groups in double-stranded DNA using NAD as a coenzyme and as the energy source for the reaction. It is essential for DNA replication and repair of damaged DNA. This chain is DNA ligase, found in Escherichia coli O6:K15:H31 (strain 536 / UPEC).